The sequence spans 139 residues: NADH-quinone oxidoreductase subunit A (139 aa).

3 helical membrane-spanning segments follow: residues 11-31 (LWPL…MLAL), 70-90 (LIAI…AWAI), and 97-117 (WPGY…LVYL).

It belongs to the complex I subunit 3 family. As to quaternary structure, NDH-1 is composed of 14 different subunits. Subunits NuoA, H, J, K, L, M, N constitute the membrane sector of the complex.

It localises to the cell inner membrane. The enzyme catalyses a quinone + NADH + 5 H(+)(in) = a quinol + NAD(+) + 4 H(+)(out). NDH-1 shuttles electrons from NADH, via FMN and iron-sulfur (Fe-S) centers, to quinones in the respiratory chain. The immediate electron acceptor for the enzyme in this species is believed to be ubiquinone. Couples the redox reaction to proton translocation (for every two electrons transferred, four hydrogen ions are translocated across the cytoplasmic membrane), and thus conserves the redox energy in a proton gradient. The chain is NADH-quinone oxidoreductase subunit A from Methylococcus capsulatus (strain ATCC 33009 / NCIMB 11132 / Bath).